The primary structure comprises 749 residues: Cytosolic phospholipase A2 (749 aa).

Residues 1-124 (MASIDPYQHI…GEKKQVPFTF (124 aa)) form the C2 domain. Positions 1–178 (MASIDPYQHI…LRKLLGPEKT (178 aa)) are phospholipid binding. Residues D40, T41, D43, N65, D93, A94, and N95 each contribute to the Ca(2+) site. A PLA2c domain is found at 138–740 (VCSSTDLRFS…NDVESRKLHH (603 aa)). Catalysis depends on S229, which acts as the Nucleophile. The segment at 428–452 (HILGNDSSDSDDEMQEPKGTENAKA) is disordered. Basic and acidic residues predominate over residues 442–452 (QEPKGTENAKA). D549 acts as the Proton acceptor in catalysis. Positions 729–749 (SLNDVESRKLHHKDSQSKFQM) are disordered. Over residues 733–749 (VESRKLHHKDSQSKFQM) the composition is skewed to basic and acidic residues.

The protein resides in the cytoplasm. It localises to the cytoplasmic vesicle. The catalysed reaction is a 1,2-diacyl-sn-glycero-3-phosphocholine + H2O = a 1-acyl-sn-glycero-3-phosphocholine + a fatty acid + H(+). It catalyses the reaction a 1-acyl-sn-glycero-3-phosphocholine + H2O = sn-glycerol 3-phosphocholine + a fatty acid + H(+). With respect to regulation, stimulated by agonists such as ATP, EGF, thrombin and bradykinin as well as by cytosolic Ca(2+). Selectively hydrolyzes arachidonyl phospholipids in the sn-2 position releasing arachidonic acid. Together with its lysophospholipid activity, it is implicated in the initiation of the inflammatory response. This is Cytosolic phospholipase A2 (pla2g4a) from Xenopus laevis (African clawed frog).